The following is a 374-amino-acid chain: Trehalose-phosphate phosphatase B (374 aa).

Belongs to the trehalose phosphatase family. The cofactor is a divalent metal cation. In terms of tissue distribution, expressed in flowers.

It catalyses the reaction alpha,alpha-trehalose 6-phosphate + H2O = alpha,alpha-trehalose + phosphate. The protein operates within glycan biosynthesis; trehalose biosynthesis. In terms of biological role, removes the phosphate from trehalose 6-phosphate to produce free trehalose. Trehalose accumulation in plant may improve abiotic stress tolerance. This Arabidopsis thaliana (Mouse-ear cress) protein is Trehalose-phosphate phosphatase B (TPPB).